The chain runs to 85 residues: Cell division topological specificity factor (85 aa).

This sequence belongs to the MinE family.

Prevents the cell division inhibition by proteins MinC and MinD at internal division sites while permitting inhibition at polar sites. This ensures cell division at the proper site by restricting the formation of a division septum at the midpoint of the long axis of the cell. This is Cell division topological specificity factor from Cellvibrio japonicus (strain Ueda107) (Pseudomonas fluorescens subsp. cellulosa).